Reading from the N-terminus, the 465-residue chain is Cysteine--tRNA ligase (465 aa).

Cys-30 serves as a coordination point for Zn(2+). A 'HIGH' region motif is present at residues 32 to 42; sequence ITVYDYCHVGH. Residues Cys-214, His-239, and Glu-243 each contribute to the Zn(2+) site. The 'KMSKS' region signature appears at 271-275; that stretch reads KMSKS. Position 274 (Lys-274) interacts with ATP.

Belongs to the class-I aminoacyl-tRNA synthetase family. In terms of assembly, monomer. The cofactor is Zn(2+).

The protein localises to the cytoplasm. The enzyme catalyses tRNA(Cys) + L-cysteine + ATP = L-cysteinyl-tRNA(Cys) + AMP + diphosphate. The sequence is that of Cysteine--tRNA ligase from Burkholderia cenocepacia (strain ATCC BAA-245 / DSM 16553 / LMG 16656 / NCTC 13227 / J2315 / CF5610) (Burkholderia cepacia (strain J2315)).